Consider the following 446-residue polypeptide: MREIVHLQAGQCGNQIGSKFWEVISDEHGIDPTGSYHGDSDLQLDRINVYYNEASGGKYVPRAVLVDLEPGTMDSVRSGPFGQIFRPDNFVFGQSGAGNNWAKGHYTEGAELVDSVLDVVRKEAEGCDCLQGFQLTHSLGGGTGSGMGTLLISKIREEYPDRIMNTFSVVPSPKVSDTVVEPYNATLSVHQLVENTDETFCIDNEALYDICFRTLKLTTPTYGDLNHLVSATMSGVTTCLRFPGQLNADLRKLAVNMVPFPRLHFFIPGFAPLTSRGGQQYRSLTVPELTQQMFDSKNMMAACDPRHGRYLTVAAIFRGRMSMKEVDEQMLNAQNKNSSYFVEWIPNNVKTAVCDIPPRGLKMAATFIGNSTAIQELFKRISEQFTAMFRRKAFLHWYTGEGMDEMEFTEAESNMNDLVSEYQQYQDATAEEEGEFEEEGEYEDGA.

Residues 1–4 carry the MREI motif motif; the sequence is MREI. 8 residues coordinate GTP: Gln11, Glu69, Ser138, Gly142, Thr143, Gly144, Asn204, and Asn226. Glu69 is a Mg(2+) binding site. Residues 426 to 446 are disordered; that stretch reads QDATAEEEGEFEEEGEYEDGA. Residues 429-446 show a composition bias toward acidic residues; that stretch reads TAEEEGEFEEEGEYEDGA. At Glu438 the chain carries 5-glutamyl polyglutamate.

It belongs to the tubulin family. In terms of assembly, dimer of alpha and beta chains. A typical microtubule is a hollow water-filled tube with an outer diameter of 25 nm and an inner diameter of 15 nM. Alpha-beta heterodimers associate head-to-tail to form protofilaments running lengthwise along the microtubule wall with the beta-tubulin subunit facing the microtubule plus end conferring a structural polarity. Microtubules usually have 13 protofilaments but different protofilament numbers can be found in some organisms and specialized cells. Mg(2+) serves as cofactor. Post-translationally, some glutamate residues at the C-terminus are polyglycylated, resulting in polyglycine chains on the gamma-carboxyl group. Glycylation is mainly limited to tubulin incorporated into axonemes (cilia and flagella) whereas glutamylation is prevalent in neuronal cells, centrioles, axonemes, and the mitotic spindle. Both modifications can coexist on the same protein on adjacent residues, and lowering polyglycylation levels increases polyglutamylation, and reciprocally. The precise function of polyglycylation is still unclear. In terms of processing, some glutamate residues at the C-terminus are polyglutamylated, resulting in polyglutamate chains on the gamma-carboxyl group. Polyglutamylation plays a key role in microtubule severing by spastin (SPAST). SPAST preferentially recognizes and acts on microtubules decorated with short polyglutamate tails: severing activity by SPAST increases as the number of glutamates per tubulin rises from one to eight, but decreases beyond this glutamylation threshold. Brain.

It localises to the cytoplasm. It is found in the cytoskeleton. In terms of biological role, tubulin is the major constituent of microtubules, a cylinder consisting of laterally associated linear protofilaments composed of alpha- and beta-tubulin heterodimers. Microtubules grow by the addition of GTP-tubulin dimers to the microtubule end, where a stabilizing cap forms. Below the cap, tubulin dimers are in GDP-bound state, owing to GTPase activity of alpha-tubulin. This Notothenia neglecta (Yellowbelly rockcod) protein is Tubulin beta-1 chain (tubb1).